A 214-amino-acid chain; its full sequence is Adenylate kinase (214 aa).

10 to 15 lines the ATP pocket; that stretch reads GAGKGT. Residues 30 to 59 form an NMP region; the sequence is STGDMFRDHKARGTELGKTVQAIMDAGGLV. AMP is bound by residues threonine 31, arginine 36, 57–59, 85–88, and glutamine 92; these read GLV and GYPR. Residues 126–163 are LID; the sequence is GRRSCPKCGAVYHVSANPPRRMGYCDRDDAGLVQRDDD. Residue arginine 127 participates in ATP binding. The Zn(2+) site is built by cysteine 130 and cysteine 133. 136–137 lines the ATP pocket; sequence VY. Residues cysteine 150 and aspartate 153 each contribute to the Zn(2+) site. Arginine 160 and arginine 171 together coordinate AMP. ATP is bound at residue glycine 199.

The protein belongs to the adenylate kinase family. Monomer.

It localises to the cytoplasm. The catalysed reaction is AMP + ATP = 2 ADP. It participates in purine metabolism; AMP biosynthesis via salvage pathway; AMP from ADP: step 1/1. Catalyzes the reversible transfer of the terminal phosphate group between ATP and AMP. Plays an important role in cellular energy homeostasis and in adenine nucleotide metabolism. This is Adenylate kinase from Anaeromyxobacter sp. (strain Fw109-5).